The sequence spans 315 residues: Rab effector Noc2 (315 aa).

In terms of domain architecture, RabBD spans glutamine 41–glycine 158. An FYVE-type zinc finger spans residues glycine 89–glutamate 146. The Zn(2+) site is built by cysteine 95, cysteine 98, cysteine 112, cysteine 115, cysteine 120, cysteine 123, cysteine 138, and cysteine 141. A disordered region spans residues glycine 170 to glycine 315. 2 stretches are compositionally biased toward basic and acidic residues: residues proline 184–glutamate 193 and leucine 221–lysine 240. Positions glycine 262–glycine 275 are enriched in polar residues. The span at glycine 298–glycine 315 shows a compositional bias: low complexity.

As to quaternary structure, recruited to dense-core vesicles through specific interaction with RAB27A in endocrine cells. Interacts with RAB3A, RAB3B, RAB3C and RAB3D. Interacts with ZYX. As to expression, moderate to high levels of expression in thyroid, ovary, stomach, heart, pancreas, skeletal muscle, kidney and liver. Also detected in epithelial cells.

Its subcellular location is the cytoplasm. It localises to the cytoplasmic vesicle. The protein localises to the secretory vesicle membrane. Its function is as follows. Rab GTPase effector involved in the late steps of regulated exocytosis, both in endocrine and exocrine cells. Acts as a potential RAB3B effector protein in epithelial cells. This Homo sapiens (Human) protein is Rab effector Noc2 (RPH3AL).